The primary structure comprises 404 residues: Alkane 1-monooxygenase 1 (404 aa).

A run of 4 helical transmembrane segments spans residues 25–45, 47–67, 94–114, and 119–139; these read HLWI…YLVS, TGWS…VPLI, VLTY…AWWV, and IGVF…GLAL. Fe cation contacts are provided by His143 and His147. A helical transmembrane segment spans residues 151 to 171; sequence TFDRWMAKLVLAVVGYGHFFI. His173, His177, and His178 together coordinate Fe cation. Residues 241-261 traverse the membrane as a helical segment; sequence VVLYAALLAFFGPLMLIFLPI. Positions 317, 320, and 321 each coordinate Fe cation.

Belongs to the fatty acid desaturase type 1 family. AlkB subfamily. It depends on Fe(3+) as a cofactor.

The protein localises to the cell inner membrane. The catalysed reaction is octane + 2 reduced [rubredoxin] + O2 + 2 H(+) = 2 oxidized [rubredoxin] + octan-1-ol + H2O. It functions in the pathway hydrocarbon metabolism; alkane degradation. Functionally, catalyzes the hydroxylation of n-alkanes and fatty acids in the presence of a NADH-rubredoxin reductase and rubredoxin. It preferably hydroxylases C5-C12 hydrocarbons. This Alcanivorax borkumensis (strain ATCC 700651 / DSM 11573 / NCIMB 13689 / SK2) protein is Alkane 1-monooxygenase 1 (alkB1).